A 1862-amino-acid chain; its full sequence is MAMSLPQLGGAGGPHTQPSLPSLPAHLQSDTHLTAHLASRFHVSHPTARLSSHALISLNTYTNSSKGPDGGKEGSAMAGAEEIADRAFLRLGHRSENQAVVFLGESGAGKSTIRAHLLTALLNKSSTPLSTKLSLAAYVFDSLTTTKTATTPTASKSGLFYELQYDTSATTNPVLIGGKLLDHRLERSRIADVPTGERNFHVLYYLLAGTSEAEKSHLGLDGGSATGTTQKRWKYLGHPTQLKVGINDAEGFQVFKNALRKLEFPRAEIAEICQILASILHIGQLEFETTSQTSVTGDDSGGFSHEGGTTITAVKNKDVLSIIAAFLGVSAADLQTTLGYKTKMIHRERVTVMLDPNGARAHAGELARTLYSLLVAWILETINQRLCAPEESIANTVSIVDFPGFCQQTPTGSALDQLLNNAATECIYNLTLQNFFDRKADMLESEEVSVAATSYFDNSDAVRGILKPGNGLLSILDDQTRRNRTDMQFLEALRRRFDGKNAAIEVGSAQAKLPGSNFMTENTSAVFTVKHFAGEVDYPVKGLIEENGEIISGDLLNMINGTKSEFVARLFGQDALQTVTHPNERTTVMQATVSSKPMRAPSVMSRKTHRTGRPSTAYKRQQQEAMEELDQQSQAGESKKNAKMTLEQGASGQFLASLDNVQKAVTDPGTNSYFVFCLKPNDRRIANQFDSKCVRMQVQTFGIAEISQRLRSADFSLFLPFGEFLGMTDAETILVGSERERAEMVIEEKQWPQNEVRVGATGVFLSERCWMEIAQLGEAVSVSGRYGGLPSSDAGDGLTPAESMAFGASKEHLVSGGNTPLMYGEKAKGGYFTDDTRSEAGVSAFGGGDMFKNLDTREQMAERGNEKSLEEVEEYRDKPSRKRWVALVFFLTWFIPDFAIRLIGRMPRKDVRMAWREKVAINMLIWLMCAVAAFFMVGFPMLICPKQYVYSSNELSSYDGDKGSKGAYVAIRGFVIDLNAFIPNHYPGSNLVSEDTLLNYAGKDISALFPIQVSALCQGKDGQIPPEVTLDNRNTNITGQPQLLASRDIDVNSVYHDFRYFTNDSRPDWYFEQMYTFKHVYLKGRMGYSPKYVKKLARDSSWNVVTIHGKVYDMTKYLQGGLRLKAKAGKPTPNIPGATDFMEDSVVQLFRSAKGQDVSKYWDNIKLSPVKKQRMETCLNNLFYIGDSDTRNSTRCQFATYFILAISVMLASILVFKFLAALQFGGKNVPENLDKFVMCMIPAYTEDEDSLRRAIDSLSRMKYDDKRKLLVVVCDGMIIGQGNDRPTPRIVLDILGVSETVDPEPLSFESLGEGMKQHNMGKIYSGLYEVQGHIVPFMVIVKVGKPSEVSRPGNRGKRDSQMVLMRFLNRVHYNLAMSPMELEMYHQIRNIIGVNPTFYEYLFQIDADTVVAADSATRMISAFIDDTRLIACCGETALTNAKGSFITMIQVYEYWISHNLSKAFESLFGSVTCLPGCFSMYRIRAAETGKPLFVSKEIVEDYSTIRVDTLHMKNLLHLGEDRYLTTLLLKYHSKYKTKYLFSAQAWTIAPDSWSVFLSQRRRWINSTVHNLAELIPLAQLCGFCCFSMRFVVFIDLLSTIVQPVIVMYIVYLIYQVATNPSVVPITAFLLLGAIYGLQAVIFILRRKWEMVGWMIMYIAAIPVFSFGLPLYSFWHMDDFNWGNTRVIAGEAGKKIVVSDEGKFDPNSIPRKKWEEYQAELWETQTQTARDDVRSEISGYSYATKAQGPFSEYGGGYQPSRPGSTAGFGHQNMSRMSLAHSEMPGNRASQFGGSQFFSPEDLVGMPSDDALLAEIRDILKTADLMTVTKKGIKQELERRFNVPLDAKRAYINSATEALLSGQL.

Positions 1 to 26 are disordered; it reads MAMSLPQLGGAGGPHTQPSLPSLPAH. In terms of domain architecture, Myosin motor spans 1-778; it reads MAMSLPQLGG…CWMEIAQLGE (778 aa). The N-linked (GlcNAc...) asparagine glycan is linked to Asn-63. 104–111 is a binding site for ATP; the sequence is GESGAGKS. Asn-123, Asn-429, Asn-483, Asn-522, and Asn-560 each carry an N-linked (GlcNAc...) asparagine glycan. Residues 592-643 are disordered; it reads TVSSKPMRAPSVMSRKTHRTGRPSTAYKRQQQEAMEELDQQSQAGESKKNAK. The segment at 658 to 682 is actin-binding; the sequence is LDNVQKAVTDPGTNSYFVFCLKPND. 2 helical membrane passes run 884-904 and 923-943; these read WVAL…RLIG and MLIW…PMLI. In terms of domain architecture, Cytochrome b5 heme-binding spans 947 to 1009; sequence QYVYSSNELS…YAGKDISALF (63 aa). Residues Asn-1036, Asn-1063, and Asn-1192 are each glycosylated (N-linked (GlcNAc...) asparagine). The chain crosses the membrane as a helical span at residues 1202 to 1222; the sequence is FILAISVMLASILVFKFLAAL. Residues Asn-1459 and Asn-1565 are each glycosylated (N-linked (GlcNAc...) asparagine). Transmembrane regions (helical) follow at residues 1590 to 1610, 1623 to 1643, and 1650 to 1670; these read FVVF…MYIV, VPIT…VIFI, and MVGW…GLPL. Residue Asn-1771 is glycosylated (N-linked (GlcNAc...) asparagine). The DEK-C domain occupies 1804-1859; that stretch reads MPSDDALLAEIRDILKTADLMTVTKKGIKQELERRFNVPLDAKRAYINSATEALLS.

In the N-terminal section; belongs to the TRAFAC class myosin-kinesin ATPase superfamily. Myosin family. This sequence in the C-terminal section; belongs to the chitin synthase family. Class V subfamily.

Its subcellular location is the cell membrane. It catalyses the reaction [(1-&gt;4)-N-acetyl-beta-D-glucosaminyl](n) + UDP-N-acetyl-alpha-D-glucosamine = [(1-&gt;4)-N-acetyl-beta-D-glucosaminyl](n+1) + UDP + H(+). Functionally, polymerizes chitin, a structural polymer of the cell wall and septum, by transferring the sugar moiety of UDP-GlcNAc to the non-reducing end of the growing chitin polymer. ChsV and chsVb do perform additive, but not redundant, functions in septum formation. Involved in cell wall integrity and resistance to antimicrobial plant defense compounds such as the tomato phytoanticipin alpha-tomatine or H(2)O(2), and plays a crucial role in vascular colonization and pathogenicity. Also plays an important role in nuclear sorting or distribution. This is Chitin synthase V from Fusarium oxysporum f. sp. lycopersici (strain 4287 / CBS 123668 / FGSC 9935 / NRRL 34936) (Fusarium vascular wilt of tomato).